The following is a 122-amino-acid chain: Large ribosomal subunit protein uL14 (122 aa).

Belongs to the universal ribosomal protein uL14 family. Part of the 50S ribosomal subunit. Forms a cluster with proteins L3 and L19. In the 70S ribosome, L14 and L19 interact and together make contacts with the 16S rRNA in bridges B5 and B8.

In terms of biological role, binds to 23S rRNA. Forms part of two intersubunit bridges in the 70S ribosome. The protein is Large ribosomal subunit protein uL14 of Rickettsia bellii (strain OSU 85-389).